A 202-amino-acid polypeptide reads, in one-letter code: Chromophore lyase CpcT/CpeT 2 (202 aa).

This sequence belongs to the CpcT/CpeT biliprotein lyase family.

Functionally, covalently attaches a chromophore to Cys residue(s) of phycobiliproteins. This chain is Chromophore lyase CpcT/CpeT 2, found in Gloeobacter violaceus (strain ATCC 29082 / PCC 7421).